We begin with the raw amino-acid sequence, 129 residues long: Translation initiation factor 5A (129 aa).

The residue at position 36 (Lys-36) is a Hypusine.

This sequence belongs to the eIF-5A family.

The protein resides in the cytoplasm. In terms of biological role, functions by promoting the formation of the first peptide bond. This is Translation initiation factor 5A (eif5a) from Thermoplasma acidophilum (strain ATCC 25905 / DSM 1728 / JCM 9062 / NBRC 15155 / AMRC-C165).